The chain runs to 710 residues: Aminopeptidase P2 (710 aa).

The transit peptide at 1–79 directs the protein to the chloroplast; the sequence is MIPLTLSSPS…IRKAQTKVVV (79 aa). Arg-147 and His-486 together coordinate a peptide. Mn(2+)-binding residues include Asp-506, Asp-517, and His-580. A peptide is bound by residues His-580, His-589, and Glu-614. Residues Glu-614 and Glu-628 each contribute to the Mn(2+) site.

Belongs to the peptidase M24B family. Homodimer. The cofactor is Mn(2+).

Its subcellular location is the plastid. The protein localises to the chloroplast. The catalysed reaction is Release of any N-terminal amino acid, including proline, that is linked to proline, even from a dipeptide or tripeptide.. Catalyzes the removal of a penultimate prolyl residue from the N-termini of peptides, such as Arg-Pro-Pro. The sequence is that of Aminopeptidase P2 from Arabidopsis thaliana (Mouse-ear cress).